Consider the following 202-residue polypeptide: Glycerol-3-phosphate acyltransferase (202 aa).

6 helical membrane passes run 2 to 22, 54 to 74, 88 to 108, 120 to 140, 141 to 161, and 162 to 182; these read MIVIMLILSYLIGAFPSGYVI, FLVTFLDIFKGFIVVFFPLWL, NGLIVGAFAILGHVYPVYLGF, VILGVNPVLLLILAAIFFGIL, YLTKYVSLSSIIASICCVIGA, and LLIRDYILFIVSIGVGVLLII.

Belongs to the PlsY family. In terms of assembly, probably interacts with PlsX.

Its subcellular location is the cell membrane. It catalyses the reaction an acyl phosphate + sn-glycerol 3-phosphate = a 1-acyl-sn-glycero-3-phosphate + phosphate. Its pathway is lipid metabolism; phospholipid metabolism. Catalyzes the transfer of an acyl group from acyl-phosphate (acyl-PO(4)) to glycerol-3-phosphate (G3P) to form lysophosphatidic acid (LPA). This enzyme utilizes acyl-phosphate as fatty acyl donor, but not acyl-CoA or acyl-ACP. The protein is Glycerol-3-phosphate acyltransferase of Staphylococcus saprophyticus subsp. saprophyticus (strain ATCC 15305 / DSM 20229 / NCIMB 8711 / NCTC 7292 / S-41).